Here is a 432-residue protein sequence, read N- to C-terminus: Asparagine--tRNA ligase 2 (432 aa).

It belongs to the class-II aminoacyl-tRNA synthetase family. Homodimer.

It is found in the cytoplasm. The catalysed reaction is tRNA(Asn) + L-asparagine + ATP = L-asparaginyl-tRNA(Asn) + AMP + diphosphate + H(+). The protein is Asparagine--tRNA ligase 2 (asnS2) of Lactiplantibacillus plantarum (strain ATCC BAA-793 / NCIMB 8826 / WCFS1) (Lactobacillus plantarum).